The chain runs to 334 residues: WD repeat-containing protein 54 (334 aa).

WD repeat units lie at residues 116-155 (SSVQ…PNIV), 162-206 (GHQT…TLLT), and 250-289 (AHAR…ESGS).

Homodimer and homotrimer; forms tight forms of dimers and trimers. Interacts with IZUMO1 and IZUMO1R/JUNO. Post-translationally, cross-linked to tightly form both dimers and trimers by TGM2. Cross-linking enhances the activation of EGF receptor-mediated signaling pathway. Cross-linking is inhibited by EGF. Ubiquitinated. EGF increases ubiquitination.

It is found in the vesicle. The protein localises to the cytoplasm. The protein resides in the cell membrane. Functionally, plays a role in the adhesion and fusion of the sperm-oocyte membrane through its interactions with IZUMO1 and IZUMO1R/JUNO. When cross-linked to form dimers and trimers, it has a regulatory effect on ERK signaling pathway activity in response to EGF stimulation. Colocalizes with the EGF receptor in WDR54-specific vesicle where it sustains the internalization and controls the degradation of the EGF receptor after EGF stimulation. This Mus musculus (Mouse) protein is WD repeat-containing protein 54.